A 253-amino-acid chain; its full sequence is 5'-nucleotidase SurE (253 aa).

Residues Asp-8, Asp-9, Ser-39, and Asn-91 each contribute to the a divalent metal cation site.

Belongs to the SurE nucleotidase family. Requires a divalent metal cation as cofactor.

Its subcellular location is the cytoplasm. The catalysed reaction is a ribonucleoside 5'-phosphate + H2O = a ribonucleoside + phosphate. In terms of biological role, nucleotidase that shows phosphatase activity on nucleoside 5'-monophosphates. In Albidiferax ferrireducens (strain ATCC BAA-621 / DSM 15236 / T118) (Rhodoferax ferrireducens), this protein is 5'-nucleotidase SurE.